The sequence spans 333 residues: Glycerol-3-phosphate dehydrogenase [NAD(P)+] (333 aa).

The NADPH site is built by Trp12, His31, and Lys105. The sn-glycerol 3-phosphate site is built by Lys105, Gly134, and Ser136. Ala138 contacts NADPH. Sn-glycerol 3-phosphate is bound by residues Lys189, Asp242, Ser252, Arg253, and Asn254. Lys189 functions as the Proton acceptor in the catalytic mechanism. NADPH is bound at residue Arg253. 2 residues coordinate NADPH: Val278 and Glu280.

Belongs to the NAD-dependent glycerol-3-phosphate dehydrogenase family.

It is found in the cytoplasm. The enzyme catalyses sn-glycerol 3-phosphate + NAD(+) = dihydroxyacetone phosphate + NADH + H(+). The catalysed reaction is sn-glycerol 3-phosphate + NADP(+) = dihydroxyacetone phosphate + NADPH + H(+). The protein operates within membrane lipid metabolism; glycerophospholipid metabolism. Functionally, catalyzes the reduction of the glycolytic intermediate dihydroxyacetone phosphate (DHAP) to sn-glycerol 3-phosphate (G3P), the key precursor for phospholipid synthesis. The polypeptide is Glycerol-3-phosphate dehydrogenase [NAD(P)+] (Brachyspira hyodysenteriae (strain ATCC 49526 / WA1)).